A 57-amino-acid chain; its full sequence is Kunitz-type serine protease inhibitor 2 (57 aa).

Residues 5-55 (CELPAETGLCKARIRSFHYNRAAQQCLEFIYGGCGGNANRFKTIDECHRTC) enclose the BPTI/Kunitz inhibitor domain. Cystine bridges form between cysteine 5–cysteine 55, cysteine 14–cysteine 38, and cysteine 30–cysteine 51.

Belongs to the venom Kunitz-type family. As to expression, expressed by the venom gland.

The protein resides in the secreted. Functionally, serine protease inhibitor. The chain is Kunitz-type serine protease inhibitor 2 from Naja nivea (Cape cobra).